Consider the following 1450-residue polypeptide: Protein clueless (1450 aa).

Disordered stretches follow at residues 1–126 (MALE…PGSE) and 266–287 (KTRP…VSEP). Low complexity predominate over residues 29-60 (NNSSAGKKQQQQQQPNQNQNLVNGNGNAADGP). Positions 62 to 71 (AKKKGKKNRN) are enriched in basic residues. S271 is subject to Phosphoserine. In terms of domain architecture, Clu spans 425–667 (RAEDAFSSKL…RTFPPDVNFL (243 aa)). Composition is skewed to basic and acidic residues over residues 725 to 734 (KQSEKTEEKA) and 743 to 765 (KESS…EEKQ). Disordered regions lie at residues 725-775 (KQSE…TKTA) and 959-1011 (PAVS…SDWT). Positions 968–983 (KKRSNGNKHNKHKSKG) are enriched in basic residues. A compositionally biased stretch (low complexity) spans 984 to 1008 (NKQQASGNQNGSSAGSSSGGSSSSS). 3 TPR repeats span residues 1102–1135 (AYNF…LNNV), 1228–1261 (ALID…NIKY), and 1263–1296 (GSKA…EKET). The tract at residues 1410–1450 (NNNGDTEAETKDATKDNKDLAGASTQLTNGDKDAETAVASS) is disordered. Positions 1417 to 1428 (AETKDATKDNKD) are enriched in basic and acidic residues.

It belongs to the CLU family.

The protein localises to the cytoplasm. In terms of biological role, mRNA-binding protein involved in proper cytoplasmic distribution of mitochondria. The protein is Protein clueless of Drosophila ananassae (Fruit fly).